The following is a 1179-amino-acid chain: DNA-directed RNA polymerase subunit beta (1179 aa).

It belongs to the RNA polymerase beta chain family. In terms of assembly, the RNAP catalytic core consists of 2 alpha, 1 beta, 1 beta' and 1 omega subunit. When a sigma factor is associated with the core the holoenzyme is formed, which can initiate transcription.

The enzyme catalyses RNA(n) + a ribonucleoside 5'-triphosphate = RNA(n+1) + diphosphate. Its function is as follows. DNA-dependent RNA polymerase catalyzes the transcription of DNA into RNA using the four ribonucleoside triphosphates as substrates. This is DNA-directed RNA polymerase subunit beta from Oceanobacillus iheyensis (strain DSM 14371 / CIP 107618 / JCM 11309 / KCTC 3954 / HTE831).